We begin with the raw amino-acid sequence, 209 residues long: uncharacterized protein (209 aa).

The next 3 helical transmembrane spans lie at 26–48, 147–169, and 179–196; these read LRYF…GLAV, AYLV…PFLM, and IVAA…VYLL.

The protein localises to the cell membrane. This is an uncharacterized protein from Archaeoglobus fulgidus (strain ATCC 49558 / DSM 4304 / JCM 9628 / NBRC 100126 / VC-16).